Here is a 506-residue protein sequence, read N- to C-terminus: MASQQAPAKDLQTNNLEFTPSHSSGVQWVEDISNSPSAQLNFSPSNNGCWATQELQSLWKMFNSWLQPEKQTKEQMISQLVLEQFLLIGHCKDKYALTEKWKASGSDMRRFMESLTDECLKPPVMVHVSMQGQEALFSENMPLKEVIKLLKQQQSATRPTPDNEQMPVDTTQDRLLATGQENSENECNNSCNATEANVGESCSGNEMDSLLIIQKEQYPEHEEGNVVFQFPLDARRASQGNSSHHVDFRSAPTPADVPMEEQPKDLSRENISEDKNNCYNTSRNAATQVYRSDNIPRKKTDSLSINKRIYHSEPEEGDIPYGVPQDSTRASQGTSTCLQESLGECFSEKDPRELPGLESRQEEPISDPVFLGKDHEANLPCESHQKRFRRDAKLFKCEECSRMFKHARSLSSHQRTHLNKKSELLCVTCQKMFKRVSDRRTHEIIHMPEKPFKCSTCEKSFSHKTNLKSHEMIHTGEMPYVCSLCSRRFRQSSTYHRHLRNYHRSD.

Positions serine 37–cysteine 119 constitute an SCAN box domain. The disordered stretch occupies residues serine 238–lysine 264. 4 consecutive C2H2-type zinc fingers follow at residues phenylalanine 395–histidine 417, leucine 424–histidine 446, phenylalanine 452–histidine 474, and tyrosine 480–histidine 503.

In terms of tissue distribution, highly expressed at the 2-cell stage but its expression is rapidly turned off.

It localises to the nucleus. Its subcellular location is the chromosome. It is found in the telomere. In terms of biological role, transcription factor required to regulate early development. Binds telomeres and plays a key role in genomic stability by regulating telomere elongation. Acts as an activator of spontaneous telomere sister chromatid exchange (T-SCE) and telomere elongation. In Mus musculus (Mouse), this protein is Zinc finger and SCAN domain containing protein 4D (Zscan4d).